The following is a 140-amino-acid chain: Neurotrophin-7 (140 aa).

Positions 1–7 (PGPRVRR) are excised as a propeptide. Cystine bridges form between cysteine 21-cysteine 101, cysteine 64-cysteine 129, and cysteine 89-cysteine 131.

The protein belongs to the NGF-beta family.

It is found in the secreted. The protein is Neurotrophin-7 (ntf7) of Cyprinus carpio (Common carp).